The chain runs to 539 residues: GMP synthase [glutamine-hydrolyzing] (539 aa).

The 199-residue stretch at 4 to 202 (KILILDFGSQ…VLQIAGAKPD (199 aa)) folds into the Glutamine amidotransferase type-1 domain. C81 serves as the catalytic Nucleophile. Catalysis depends on residues H176 and E178. The 193-residue stretch at 203–395 (WIMKNHIEEA…LGLPPEMVYR (193 aa)) folds into the GMPS ATP-PPase domain. 230-236 (SGGVDSS) provides a ligand contact to ATP.

As to quaternary structure, homodimer.

The catalysed reaction is XMP + L-glutamine + ATP + H2O = GMP + L-glutamate + AMP + diphosphate + 2 H(+). It participates in purine metabolism; GMP biosynthesis; GMP from XMP (L-Gln route): step 1/1. Its function is as follows. Catalyzes the synthesis of GMP from XMP. The polypeptide is GMP synthase [glutamine-hydrolyzing] (Burkholderia vietnamiensis (strain G4 / LMG 22486) (Burkholderia cepacia (strain R1808))).